A 320-amino-acid polypeptide reads, in one-letter code: NADH-ubiquinone oxidoreductase chain 1 (320 aa).

Helical transmembrane passes span 3–23 (LITI…VAFL), 72–92 (ILLI…WTPI), 103–123 (LGFL…LWAG), 147–167 (VTLG…TMQL), 174–194 (HIWL…STLA), 226–246 (FFLA…ILFI), 255–275 (ELFL…FLWI), and 295–315 (FLPL…SISG).

This sequence belongs to the complex I subunit 1 family.

The protein localises to the mitochondrion inner membrane. It catalyses the reaction a ubiquinone + NADH + 5 H(+)(in) = a ubiquinol + NAD(+) + 4 H(+)(out). Core subunit of the mitochondrial membrane respiratory chain NADH dehydrogenase (Complex I) that is believed to belong to the minimal assembly required for catalysis. Complex I functions in the transfer of electrons from NADH to the respiratory chain. The immediate electron acceptor for the enzyme is believed to be ubiquinone. This is NADH-ubiquinone oxidoreductase chain 1 (MT-ND1) from Varanus jobiensis (Peach throat monitor).